Reading from the N-terminus, the 515-residue chain is MATTLNPSEISELIKNRIEKVKLAAESRNEGTVTSVSDGIVRIFGLADVMQGEMIELPNNSFALALNLERDSVGAVVLGGYEHLREGDVAKTTGRILEVPVGPELLGRVVNALGEPIDGKGPLGTDLTAPVERVAPGVIWRKSVDQPVQTGYKSVDSMIPIGRGQRELIIGDRQTGKTAMAIDAVINQKGTGIKCVYVAIGQKASTIANIVRKLEENGALAHTVVVAATASESAAMQYISAYSGCTMGEYFMDRGEDALIVYDDLSKQAVAYRQISLLLKRPPGREAYPGDVFYLHSRLLERAARVSEEYVEKFTEGKVTGKTGSLTALPIIETQAGDVSAFVPTNVISITDGQIFLETDLFNAGIRPAVNAGISVSRVGGSAQTKIIKKLSGGIRISLAQYRELAAFAQFASDLDEATRKQLERGQRVTELMKQKQYAPMSIANQALSIYAVNEGYLDDVPVNKLLAFEEGLHAHFANTQGELINKVNATGGWDNDIEGAFKKGIAEFKTTGSW.

ATP is bound at residue 171–178 (GDRQTGKT).

Belongs to the ATPase alpha/beta chains family. In terms of assembly, F-type ATPases have 2 components, CF(1) - the catalytic core - and CF(0) - the membrane proton channel. CF(1) has five subunits: alpha(3), beta(3), gamma(1), delta(1), epsilon(1). CF(0) has three main subunits: a(1), b(2) and c(9-12). The alpha and beta chains form an alternating ring which encloses part of the gamma chain. CF(1) is attached to CF(0) by a central stalk formed by the gamma and epsilon chains, while a peripheral stalk is formed by the delta and b chains.

It is found in the cell inner membrane. The enzyme catalyses ATP + H2O + 4 H(+)(in) = ADP + phosphate + 5 H(+)(out). Functionally, produces ATP from ADP in the presence of a proton gradient across the membrane. The alpha chain is a regulatory subunit. The protein is ATP synthase subunit alpha of Stenotrophomonas maltophilia (strain R551-3).